Here is a 253-residue protein sequence, read N- to C-terminus: MLKLRVIPCLDVKDGRVVKGVNFVSLRDAGDPVEQAKLYDAAGADELTFLDITASVENRDTILDVVRRTAEAICLPLTVGGGVRTCEDMRRLLLAGADKCAVNSAAIKNPDLIREASERFGSQCIVVAIDARSNGKGGWEVYAKGGREPTGLDVVEWARKMQDLGAGEILLTSMDRDGTRAGFDLDLLRAVCGAVTVPIVASGGVGELQHFVEGAEVGASGLLAASVFHFGQFRIDEVKNALNKAGLPVRLGE.

Catalysis depends on residues aspartate 11 and aspartate 130.

The protein belongs to the HisA/HisF family. Heterodimer of HisH and HisF.

The protein localises to the cytoplasm. It catalyses the reaction 5-[(5-phospho-1-deoxy-D-ribulos-1-ylimino)methylamino]-1-(5-phospho-beta-D-ribosyl)imidazole-4-carboxamide + L-glutamine = D-erythro-1-(imidazol-4-yl)glycerol 3-phosphate + 5-amino-1-(5-phospho-beta-D-ribosyl)imidazole-4-carboxamide + L-glutamate + H(+). The protein operates within amino-acid biosynthesis; L-histidine biosynthesis; L-histidine from 5-phospho-alpha-D-ribose 1-diphosphate: step 5/9. IGPS catalyzes the conversion of PRFAR and glutamine to IGP, AICAR and glutamate. The HisF subunit catalyzes the cyclization activity that produces IGP and AICAR from PRFAR using the ammonia provided by the HisH subunit. This chain is Imidazole glycerol phosphate synthase subunit HisF, found in Gluconobacter oxydans (strain 621H) (Gluconobacter suboxydans).